We begin with the raw amino-acid sequence, 431 residues long: Glucose-1-phosphate adenylyltransferase (431 aa).

Beta-D-fructose 1,6-bisphosphate is bound at residue lysine 39. Residues arginine 40, histidine 46, and arginine 52 each coordinate AMP. Tyrosine 114 is an alpha-D-glucose 1-phosphate binding site. Arginine 130 is a binding site for AMP. Alpha-D-glucose 1-phosphate contacts are provided by residues glycine 179, 194-195 (EK), and serine 212. AMP is bound by residues glutamate 370 and arginine 386. Residues 419–423 (REMLR) and 429–431 (QER) contribute to the beta-D-fructose 1,6-bisphosphate site.

Belongs to the bacterial/plant glucose-1-phosphate adenylyltransferase family. In terms of assembly, homotetramer.

The enzyme catalyses alpha-D-glucose 1-phosphate + ATP + H(+) = ADP-alpha-D-glucose + diphosphate. The protein operates within glycan biosynthesis; glycogen biosynthesis. With respect to regulation, allosterically activated by fructose-1,6-bisphosphate (F16BP) and inhibited by AMP. Its function is as follows. Involved in the biosynthesis of ADP-glucose, a building block required for the elongation reactions to produce glycogen. Catalyzes the reaction between ATP and alpha-D-glucose 1-phosphate (G1P) to produce pyrophosphate and ADP-Glc. The sequence is that of Glucose-1-phosphate adenylyltransferase from Escherichia fergusonii (strain ATCC 35469 / DSM 13698 / CCUG 18766 / IAM 14443 / JCM 21226 / LMG 7866 / NBRC 102419 / NCTC 12128 / CDC 0568-73).